The sequence spans 90 residues: Small ribosomal subunit protein bS18 (90 aa).

This sequence belongs to the bacterial ribosomal protein bS18 family. Part of the 30S ribosomal subunit. Forms a tight heterodimer with protein bS6.

Its function is as follows. Binds as a heterodimer with protein bS6 to the central domain of the 16S rRNA, where it helps stabilize the platform of the 30S subunit. The protein is Small ribosomal subunit protein bS18 of Bordetella avium (strain 197N).